The chain runs to 369 residues: Methionine import ATP-binding protein MetN (369 aa).

The ABC transporter domain occupies 31–266; sequence VEMKDVRRMF…PQSPVTQSML (236 aa). Residue 63–70 coordinates ATP; that stretch reads GRSGAGKS.

The protein belongs to the ABC transporter superfamily. Methionine importer (TC 3.A.1.24) family. The complex is composed of two ATP-binding proteins (MetN), two transmembrane proteins (MetI) and a solute-binding protein (MetQ).

It localises to the cell inner membrane. It catalyses the reaction L-methionine(out) + ATP + H2O = L-methionine(in) + ADP + phosphate + H(+). It carries out the reaction D-methionine(out) + ATP + H2O = D-methionine(in) + ADP + phosphate + H(+). Functionally, part of the ABC transporter complex MetNIQ involved in methionine import. Responsible for energy coupling to the transport system. The chain is Methionine import ATP-binding protein MetN from Brucella abortus (strain 2308).